We begin with the raw amino-acid sequence, 211 residues long: Dual specificity phosphatase 29 (211 aa).

In terms of domain architecture, Tyrosine-protein phosphatase spans His47–Ile192. His136 to Arg143 is a binding site for substrate. Cys137 serves as the catalytic Phosphocysteine intermediate.

The protein belongs to the protein-tyrosine phosphatase family. Non-receptor class dual specificity subfamily.

Its subcellular location is the cytoplasm. The protein localises to the nucleus. It catalyses the reaction O-phospho-L-tyrosyl-[protein] + H2O = L-tyrosyl-[protein] + phosphate. It carries out the reaction O-phospho-L-seryl-[protein] + H2O = L-seryl-[protein] + phosphate. The enzyme catalyses O-phospho-L-threonyl-[protein] + H2O = L-threonyl-[protein] + phosphate. Functionally, dual specificity phosphatase able to dephosphorylate phosphotyrosine, phosphoserine and phosphothreonine residues within the same substrate, with a preference for phosphotyrosine as a substrate. Involved in the modulation of AMPK and MAPK1/2 signaling pathways. This Callorhinchus milii (Ghost shark) protein is Dual specificity phosphatase 29 (dusp29).